The chain runs to 952 residues: MSDYKDTLNLPETGFPMRGNLANREPEMLKRWYKEDLYGEIRKAKKGKKSFVLHDGPPYANGDIHIGHALNKILKDIIIKSKTLSGFDAPYIPGWDCHGLPIELMVEKKKGKPGQKISAAEFREECRKYAAGQVEGQKESFKRLGIMGEWDKPYRTMDFGTEANIIRSLGKIADKGHLLKGFKPVHWCTDCGSALAEAEVEYKDKVSPSIDVKFTAADEAALLEKFTLAEGHAGQGEISIVIWTTTPWTLPANRAVCLRDDLEYVLIQVEANGDQPAQRIVVASELAKDVMDRAGIEHFHNLGFATGADLELSQFNHPFYNFTVPAVLGDHVTTDSGTGVVHTAPGHGQEDFVVGKKYNLEIANPVGSNGVYLPDTELFAGQHVFKANDSVLEVLKEKGALLHHHAYEHSYPHCWRHKTPIIFRATPQWFISMDQAGLRAKALESTKSVEWMPEWGQSRIEGMIEGRPEWCISRQRTWGVPIALFVHKETSELHPDSPALIEKVAKLVEEKGIQAWWDVDAAELMGAEDADKYEKVLDTLDVWFDSGVTHFSVVDSREEYNFPNEERTHSADLYLEGSDQHRGWFQSSLISSIAMKDEAPYKQVLTHGFVVDGNGRKMSKSIGNVVAPKDVTNKLGADILRLWVASTDYTNEVAVSDEILKRSADAYRRIRNTARFFLANLNGFNPETDLVPAEEMVALDRWAVGRAQAAQEEIVKAYGEYNTHGVTQRLMQFCSIEMGSFYLDVIKDRQYTAKQGSHAQRSCQTALYYIVEALVRWMAPIMSFTADEIWNEMPGERDTFVFTGEWFEGLFGLADDEELSNEFWTEIQSVRGAVNKLLEDARKEKTIGGALQAEVTLYADDALAAKINKLEDELRFVLITSAAVVKPLSDKSDTAQATDVEGLYVEVAATEAEKCDRCWHHTPDVGTIEGHEKICGRCVSNIDGEGEVRKFA.

Positions 58–68 (PYANGDIHIGH) match the 'HIGH' region motif. Glutamate 576 is an L-isoleucyl-5'-AMP binding site. A 'KMSKS' region motif is present at residues 617-621 (KMSKS). Lysine 620 contributes to the ATP binding site. The Zn(2+) site is built by cysteine 915, cysteine 918, cysteine 935, and cysteine 938.

Belongs to the class-I aminoacyl-tRNA synthetase family. IleS type 1 subfamily. As to quaternary structure, monomer. Requires Zn(2+) as cofactor.

It is found in the cytoplasm. The enzyme catalyses tRNA(Ile) + L-isoleucine + ATP = L-isoleucyl-tRNA(Ile) + AMP + diphosphate. Functionally, catalyzes the attachment of isoleucine to tRNA(Ile). As IleRS can inadvertently accommodate and process structurally similar amino acids such as valine, to avoid such errors it has two additional distinct tRNA(Ile)-dependent editing activities. One activity is designated as 'pretransfer' editing and involves the hydrolysis of activated Val-AMP. The other activity is designated 'posttransfer' editing and involves deacylation of mischarged Val-tRNA(Ile). This Vibrio atlanticus (strain LGP32) (Vibrio splendidus (strain Mel32)) protein is Isoleucine--tRNA ligase.